A 328-amino-acid chain; its full sequence is Chlorate reductase subunit beta (328 aa).

4Fe-4S ferredoxin-type domains lie at 6–35, 125–156, and 158–187; these read VAYVFDLNKCIGCHTCTMACKQLWTNRDGR, NHSFYLPRICNHCSNPACLAACPTKAIYKRPE, and GIVVVDQTRCRGYRYCVKACPYGKMYFNLQ. Cys-15, Cys-18, Cys-21, Cys-25, Cys-134, Cys-137, and Cys-142 together coordinate [4Fe-4S] cluster. Residues Cys-146, Cys-167, and Cys-173 each contribute to the [3Fe-4S] cluster site. Residues Cys-177, Cys-194, Cys-197, Cys-209, and Cys-213 each coordinate [4Fe-4S] cluster.

As to quaternary structure, heterotrimer of alpha, beta and gamma subunits. [3Fe-4S] cluster is required as a cofactor. Requires [4Fe-4S] cluster as cofactor.

The protein resides in the periplasm. Functionally, electron transfer subunit of the terminal reductase during anaerobic growth on chlorate. In Ideonella dechloratans, this protein is Chlorate reductase subunit beta (clrB).